A 473-amino-acid polypeptide reads, in one-letter code: Hyaluronidase-2 (473 aa).

The first 20 residues, methionine 1–alanine 20, serve as a signal peptide directing secretion. Cystine bridges form between cysteine 47–cysteine 343 and cysteine 214–cysteine 230. Asparagine 77 and asparagine 106 each carry an N-linked (GlcNAc...) asparagine glycan. Catalysis depends on glutamate 138, which acts as the Proton donor. N-linked (GlcNAc...) asparagine glycans are attached at residues asparagine 340 and asparagine 360. Positions alanine 364–glutamine 442 constitute an EGF-like domain. 3 cysteine pairs are disulfide-bonded: cysteine 368–cysteine 379, cysteine 373–cysteine 430, and cysteine 432–cysteine 441. Glycine 451 carries the GPI-anchor amidated glycine lipid modification. Positions alanine 452–threonine 473 are cleaved as a propeptide — removed in mature form.

It belongs to the glycosyl hydrolase 56 family. Interacts with MST1R.

The protein resides in the cell membrane. It catalyses the reaction Random hydrolysis of (1-&gt;4)-linkages between N-acetyl-beta-D-glucosamine and D-glucuronate residues in hyaluronate.. Its function is as follows. Catalyzes hyaluronan degradation into small fragments that are endocytosed and degraded in lysosomes by HYAL1 and exoglycosidases. Essential for the breakdown of extracellular matrix hyaluronan. The protein is Hyaluronidase-2 (HYAL2) of Bos taurus (Bovine).